The following is a 470-amino-acid chain: Glutamate--tRNA ligase (470 aa).

Positions 9–19 (PSPTGFLHVGG) match the 'HIGH' region motif. The 'KMSKS' region motif lies at 236–240 (RLSKR). K239 lines the ATP pocket.

Belongs to the class-I aminoacyl-tRNA synthetase family. Glutamate--tRNA ligase type 1 subfamily. As to quaternary structure, monomer.

It is found in the cytoplasm. The catalysed reaction is tRNA(Glu) + L-glutamate + ATP = L-glutamyl-tRNA(Glu) + AMP + diphosphate. In terms of biological role, catalyzes the attachment of glutamate to tRNA(Glu) in a two-step reaction: glutamate is first activated by ATP to form Glu-AMP and then transferred to the acceptor end of tRNA(Glu). In Legionella pneumophila subsp. pneumophila (strain Philadelphia 1 / ATCC 33152 / DSM 7513), this protein is Glutamate--tRNA ligase.